Consider the following 201-residue polypeptide: Large ribosomal subunit protein eL15 (201 aa).

The protein belongs to the eukaryotic ribosomal protein eL15 family.

This chain is Large ribosomal subunit protein eL15 (RPL15), found in Quercus suber (Cork oak).